The sequence spans 838 residues: Xyloglucanase (838 aa).

Positions 1-19 (MKVSRVLALVLGAVIPAHA) are cleaved as a signal peptide. The active-site Nucleophile is the D53. Residues N232 and N436 are each glycosylated (N-linked (GlcNAc...) asparagine). D469 serves as the catalytic Proton donor. Residues 750–801 (GTGGTSSSTKQSSSSTSSASSSTTLRSSVVSTTRASTVTSSRTSSAAGPTGS) form a disordered region. Residues 754–797 (TSSSTKQSSSSTSSASSSTTLRSSVVSTTRASTVTSSRTSSAAG) show a composition bias toward low complexity. Residues 802 to 838 (GVAGHYAQCGGIGWTGPTQCVAPYVCQKQNDYYYQCV) form the CBM1 domain.

Belongs to the glycosyl hydrolase 74 family.

The enzyme catalyses Hydrolysis of (1-&gt;4)-D-glucosidic linkages in xyloglucans so as to successively remove oligosaccharides from the newly-formed chain end after endo-initiation on a polymer molecule.. In terms of biological role, hydrolyzes the glucosidic bonds of unbranched Glc residues in tamarind seed xyloglucan, producing XXXG, XLXG, XXLG and XLLG. Has a low activity against beta-glucan and carboxymethylcellulose. Not active against Avicel, laminarin, xylan, galactomannan, linear and branched arabinans, galactan, polygalacturonic acid, starch, beta-D-Glcp, beta-D-cellobiose, beta-D-Galp, beta-D-Xylp, alpha-D-Xylp, alpha-L-Araf and alpha-L-Arap. The protein is Xyloglucanase of Hypocrea jecorina (strain QM6a) (Trichoderma reesei).